We begin with the raw amino-acid sequence, 114 residues long: Fluoride-specific ion channel FluC 1 (114 aa).

Transmembrane regions (helical) follow at residues A23–F43, L52–V72, and F84–G104. Residues G62 and T65 each contribute to the Na(+) site.

Belongs to the fluoride channel Fluc/FEX (TC 1.A.43) family.

It is found in the cell membrane. It carries out the reaction fluoride(in) = fluoride(out). With respect to regulation, na(+) is not transported, but it plays an essential structural role and its presence is essential for fluoride channel function. Fluoride-specific ion channel. Important for reducing fluoride concentration in the cell, thus reducing its toxicity. The sequence is that of Fluoride-specific ion channel FluC 1 from Desulfitobacterium hafniense (strain Y51).